The following is a 255-amino-acid chain: MDIIQVIVLSIIEGITEFLPISSTGHLIIVSNLMNLAQNAVQTNFEITIQLASIFAVCYEYREKFYNNLELWKKIIISFIPVGIMGLLFHKIVYQLFTVQIVATAFIVGGIIFLIVEKYYKEKEHNIKDLKDISYKQSLLIGIAQAFSLIPGTSRSGATIVGGMLCNLNRKTATEFSFLGALPVMLAASLFDIVKHHSELGSGDISNLVVGFIVSFFMALITIRLFLKYIEKYNFVPFGIYRILFGVILLMFFVR.

6 consecutive transmembrane segments (helical) span residues 1-21 (MDII…FLPI), 75-95 (IIIS…IVYQ), 96-116 (LFTV…FLIV), 174-194 (TEFS…FDIV), 203-223 (GDIS…LITI), and 234-254 (NFVP…MFFV).

The protein belongs to the UppP family.

It is found in the cell membrane. It catalyses the reaction di-trans,octa-cis-undecaprenyl diphosphate + H2O = di-trans,octa-cis-undecaprenyl phosphate + phosphate + H(+). Its function is as follows. Catalyzes the dephosphorylation of undecaprenyl diphosphate (UPP). The polypeptide is Undecaprenyl-diphosphatase (Methanococcus aeolicus (strain ATCC BAA-1280 / DSM 17508 / OCM 812 / Nankai-3)).